We begin with the raw amino-acid sequence, 177 residues long: Putative peroxiredoxin (177 aa).

In terms of domain architecture, Thioredoxin spans 8-177; that stretch reads TAKGNEIPDT…ASIDTILTKV (170 aa). Residue C64 is the Cysteine sulfenic acid (-SOH) intermediate of the active site. A Microbody targeting signal motif is present at residues 175–177; the sequence is TKV.

This sequence belongs to the peroxiredoxin family. Prx5 subfamily. Homodimer; disulfide-linked, upon oxidation.

The catalysed reaction is a hydroperoxide + [thioredoxin]-dithiol = an alcohol + [thioredoxin]-disulfide + H2O. Thiol-specific peroxidase that catalyzes the reduction of hydrogen peroxide and organic hydroperoxides to water and alcohols, respectively. Plays a role in cell protection against oxidative stress by detoxifying peroxides and as sensor of hydrogen peroxide-mediated signaling events. The chain is Putative peroxiredoxin from Malassezia furfur (Pityriasis versicolor infection agent).